The sequence spans 1150 residues: Pyruvate carboxylase (1150 aa).

One can recognise a Biotin carboxylation domain in the interval glutamine 3 to glutamate 455. Positions 119, 161, 211, and 278 each coordinate ATP. In terms of domain architecture, ATP-grasp spans arginine 123–alanine 319. Residue arginine 294 is part of the active site. Residues valine 533–glutamate 802 form the Pyruvate carboxyltransferase domain. Arginine 541–glutamine 545 contacts substrate. Positions 542, 712, 741, and 743 each coordinate Mn(2+). The residue at position 712 (lysine 712) is an N6-carboxylysine. The Biotinyl-binding domain occupies lysine 1071 to glutamate 1146. Lysine 1112 is subject to N6-biotinyllysine.

In terms of assembly, homotetramer. Requires biotin as cofactor.

It catalyses the reaction hydrogencarbonate + pyruvate + ATP = oxaloacetate + ADP + phosphate + H(+). In terms of biological role, catalyzes a 2-step reaction, involving the ATP-dependent carboxylation of the covalently attached biotin in the first step and the transfer of the carboxyl group to pyruvate in the second. The protein is Pyruvate carboxylase (pycA) of Staphylococcus aureus (strain Mu50 / ATCC 700699).